A 504-amino-acid chain; its full sequence is Heat shock 70 kDa protein 14 (504 aa).

This sequence belongs to the heat shock protein 70 family. In terms of assembly, component of ribosome-associated complex (RAC).

Its subcellular location is the cytoplasm. It localises to the cytosol. In terms of biological role, component of the ribosome-associated complex (RAC), a complex involved in folding or maintaining nascent polypeptides in a folding-competent state. The polypeptide is Heat shock 70 kDa protein 14 (hspa14) (Danio rerio (Zebrafish)).